A 283-amino-acid polypeptide reads, in one-letter code: uncharacterized protein (283 aa).

Residues 4–131 (RPLHAFEVVA…MGPGGAYAPD (128 aa)) enclose the FAD-binding FR-type domain.

This is an uncharacterized protein from Mycobacterium bovis (strain ATCC BAA-935 / AF2122/97).